The following is a 352-amino-acid chain: Nicotinate-nucleotide--dimethylbenzimidazole phosphoribosyltransferase (352 aa).

The active-site Proton acceptor is the Glu318.

This sequence belongs to the CobT family.

It carries out the reaction 5,6-dimethylbenzimidazole + nicotinate beta-D-ribonucleotide = alpha-ribazole 5'-phosphate + nicotinate + H(+). It functions in the pathway nucleoside biosynthesis; alpha-ribazole biosynthesis; alpha-ribazole from 5,6-dimethylbenzimidazole: step 1/2. Catalyzes the synthesis of alpha-ribazole-5'-phosphate from nicotinate mononucleotide (NAMN) and 5,6-dimethylbenzimidazole (DMB). The sequence is that of Nicotinate-nucleotide--dimethylbenzimidazole phosphoribosyltransferase from Geotalea uraniireducens (strain Rf4) (Geobacter uraniireducens).